Consider the following 420-residue polypeptide: Pyruvate dehydrogenase E1 component subunit alpha, mitochondrial (420 aa).

The transit peptide at 1–33 (MLAASFKRQPSQLVRGLGAVLRTPTRIGHVRTM) directs the protein to the mitochondrion. Pyruvate is bound by residues His112, Tyr138, Arg139, Ala177, Gly185, Val187, Asp216, Gly217, Ala218, Asn245, and Tyr247. Thiamine diphosphate is bound by residues Tyr138 and Arg139. Gly185, Val187, Asp216, Gly217, Ala218, and Asn245 together coordinate thiamine diphosphate. Mg(2+) is bound at residue Asp216. Mg(2+)-binding residues include Asn245 and Tyr247. Residue His312 participates in thiamine diphosphate binding. Ser313 is subject to Phosphoserine; by PDK1 and PDK2.

Pyruvate dehydrogenase (E1) is a tetramer of 2 alpha and 2 beta subunits. Eukaryotic pyruvate dehydrogenase (PDH) complexes are organized as a core consisting of the oligomeric dihydrolipoamide acetyl-transferase (E2), around which are arranged multiple copies of pyruvate dehydrogenase (E1), dihydrolipoamide dehydrogenase (E3) and protein X (E3BP) bound by non-covalent bonds. It depends on thiamine diphosphate as a cofactor. Mg(2+) is required as a cofactor. In terms of processing, phosphorylated at Ser-313 by pyruvate dehydrogenase kinases PKP1 (PDK1) and PKP2 (PDK2), and dephosphorylated by pyruvate dehydrogenase phosphatases PTC5 and PTC6.

It is found in the mitochondrion matrix. It catalyses the reaction N(6)-[(R)-lipoyl]-L-lysyl-[protein] + pyruvate + H(+) = N(6)-[(R)-S(8)-acetyldihydrolipoyl]-L-lysyl-[protein] + CO2. Its activity is regulated as follows. E1 activity is regulated by phosphorylation (inactivation) and dephosphorylation (activation) of the alpha subunit. Its function is as follows. The pyruvate dehydrogenase complex catalyzes the overall conversion of pyruvate to acetyl-CoA and CO(2). The sequence is that of Pyruvate dehydrogenase E1 component subunit alpha, mitochondrial (PDA1) from Saccharomyces cerevisiae (strain ATCC 204508 / S288c) (Baker's yeast).